The primary structure comprises 155 residues: Small ribosomal subunit protein uS7c (155 aa).

This sequence belongs to the universal ribosomal protein uS7 family. In terms of assembly, part of the 30S ribosomal subunit.

It localises to the plastid. The protein resides in the chloroplast. One of the primary rRNA binding proteins, it binds directly to 16S rRNA where it nucleates assembly of the head domain of the 30S subunit. This Dioscorea bulbifera (Air potato) protein is Small ribosomal subunit protein uS7c (rps7).